We begin with the raw amino-acid sequence, 239 residues long: Fatty acid metabolism regulator protein (239 aa).

The HTH gntR-type domain maps to Gln-6 to Phe-74. Residues Glu-34–Gln-53 constitute a DNA-binding region (H-T-H motif).

In terms of assembly, homodimer.

The protein localises to the cytoplasm. Multifunctional regulator of fatty acid metabolism. In Shigella flexneri, this protein is Fatty acid metabolism regulator protein.